Reading from the N-terminus, the 184-residue chain is uncharacterized protein (184 aa).

The disordered stretch occupies residues 1 to 24 (MGISDQINSNLSSQSPFTVSTNPS).

This is an uncharacterized protein from Dictyostelium discoideum (Social amoeba).